We begin with the raw amino-acid sequence, 492 residues long: Pentatricopeptide repeat-containing protein At4g21705, mitochondrial (492 aa).

The transit peptide at 1–17 directs the protein to the mitochondrion; sequence MNILRRIPANLIASRYY. PPR repeat units lie at residues 125 to 159, 160 to 194, 195 to 225, 231 to 261, 266 to 296, 301 to 335, 336 to 370, and 371 to 405; these read NDKT…GFVT, SSLT…NVAP, DNYS…MERR, DWNT…SENR, DGEG…EKDV, INQD…GNCY, DFRV…GKAT, and TPES…EVGS.

Belongs to the PPR family. P subfamily.

The protein resides in the mitochondrion. The chain is Pentatricopeptide repeat-containing protein At4g21705, mitochondrial from Arabidopsis thaliana (Mouse-ear cress).